Reading from the N-terminus, the 730-residue chain is Polyphosphate kinase (730 aa).

The span at 1-21 shows a compositional bias: basic and acidic residues; it reads MMRHDRNVTEIDAETRPDENL. Residues 1-39 form a disordered region; it reads MMRHDRNVTEIDAETRPDENLWHSGDSAVGAPPAATPAA. Residue Asn86 participates in ATP binding. The Mg(2+) site is built by Arg423 and Arg453. The Phosphohistidine intermediate role is filled by His483. Tyr516, Arg612, and His640 together coordinate ATP.

This sequence belongs to the polyphosphate kinase 1 (PPK1) family. Requires Mg(2+) as cofactor. In terms of processing, an intermediate of this reaction is the autophosphorylated ppk in which a phosphate is covalently linked to a histidine residue through a N-P bond.

The enzyme catalyses [phosphate](n) + ATP = [phosphate](n+1) + ADP. In terms of biological role, catalyzes the reversible transfer of the terminal phosphate of ATP to form a long-chain polyphosphate (polyP). This Mycobacterium avium (strain 104) protein is Polyphosphate kinase.